The chain runs to 182 residues: CDP-diacylglycerol--glycerol-3-phosphate 3-phosphatidyltransferase (182 aa).

At 2 to 12 (QFNIPTLLTLF) the chain is on the cytoplasmic side. The helical transmembrane segment at 13 to 37 (RVILIPFFVLVFYLPVTWSPFAAAL) threads the bilayer. Residues 38–60 (IFCVAAVTDWFDGFLARRWNQST) lie on the Periplasmic side of the membrane. Residues 61-81 (RFGAFLDPVADKVLVAIAMVL) traverse the membrane as a helical segment. The Cytoplasmic portion of the chain corresponds to 82 to 86 (VTEHY). Residues 87-107 (HSWWVTLPAATMIAREIIISA) form a helical membrane-spanning segment. Over 108 to 145 (LREWMAELGKRSSVAVSWIGKVKTTAQMVALAWLLWRP) the chain is Periplasmic. A helical transmembrane segment spans residues 146-168 (NIWVEYVGIALFFVAAVLTLWSM). At 169-181 (LQYLSAARADLLD) the chain is on the cytoplasmic side.

It belongs to the CDP-alcohol phosphatidyltransferase class-I family.

The protein localises to the cell inner membrane. It catalyses the reaction a CDP-1,2-diacyl-sn-glycerol + sn-glycerol 3-phosphate = a 1,2-diacyl-sn-glycero-3-phospho-(1'-sn-glycero-3'-phosphate) + CMP + H(+). The protein operates within phospholipid metabolism; phosphatidylglycerol biosynthesis; phosphatidylglycerol from CDP-diacylglycerol: step 1/2. Functionally, catalyzes the conversion of cytidine diphosphate diacylglycerol (CDP-DG) and glycerol 3-phosphate into phosphatidylglycerol. Essential for the synthesis of anionic phospholipids, thereby playing a role in balancing the ratio of zwitterionic and anionic phospholipids, which is thought to be important for normal membrane function. In Shigella boydii serotype 4 (strain Sb227), this protein is CDP-diacylglycerol--glycerol-3-phosphate 3-phosphatidyltransferase.